We begin with the raw amino-acid sequence, 346 residues long: c-di-GMP synthase (346 aa).

The protein belongs to the CD-NTase family.

The enzyme catalyses 2 GTP = 3',3'-c-di-GMP + 2 diphosphate. In terms of biological role, cyclic nucleotide synthase (second messenger synthase) of a CBASS antivirus system. CBASS (cyclic oligonucleotide-based antiphage signaling system) provides immunity against bacteriophage. The CD-NTase protein synthesizes cyclic nucleotides in response to infection; these serve as specific second messenger signals. The signals activate a diverse range of effectors, leading to bacterial cell death and thus abortive phage infection. A type I-D(GG) CBASS system. Its function is as follows. Cyclic dinucleotide synthase that catalyzes the synthesis of c-di-GMP, has no activity with other NTP substrates. The polypeptide is c-di-GMP synthase (Lachnospiraceae bacterium (strain RUG226)).